Consider the following 688-residue polypeptide: Glycine--tRNA ligase beta subunit (688 aa).

This sequence belongs to the class-II aminoacyl-tRNA synthetase family. In terms of assembly, tetramer of two alpha and two beta subunits.

Its subcellular location is the cytoplasm. It catalyses the reaction tRNA(Gly) + glycine + ATP = glycyl-tRNA(Gly) + AMP + diphosphate. The protein is Glycine--tRNA ligase beta subunit of Shewanella sp. (strain ANA-3).